Consider the following 118-residue polypeptide: Ribosome-binding factor A (118 aa).

Belongs to the RbfA family. In terms of assembly, monomer. Binds 30S ribosomal subunits, but not 50S ribosomal subunits or 70S ribosomes.

It is found in the cytoplasm. Its function is as follows. One of several proteins that assist in the late maturation steps of the functional core of the 30S ribosomal subunit. Associates with free 30S ribosomal subunits (but not with 30S subunits that are part of 70S ribosomes or polysomes). Required for efficient processing of 16S rRNA. May interact with the 5'-terminal helix region of 16S rRNA. This chain is Ribosome-binding factor A, found in Clostridium beijerinckii (strain ATCC 51743 / NCIMB 8052) (Clostridium acetobutylicum).